The following is a 276-amino-acid chain: 2-dehydro-3-deoxyphosphooctonate aldolase (276 aa).

The protein belongs to the KdsA family.

It is found in the cytoplasm. The enzyme catalyses D-arabinose 5-phosphate + phosphoenolpyruvate + H2O = 3-deoxy-alpha-D-manno-2-octulosonate-8-phosphate + phosphate. It functions in the pathway carbohydrate biosynthesis; 3-deoxy-D-manno-octulosonate biosynthesis; 3-deoxy-D-manno-octulosonate from D-ribulose 5-phosphate: step 2/3. It participates in bacterial outer membrane biogenesis; lipopolysaccharide biosynthesis. This is 2-dehydro-3-deoxyphosphooctonate aldolase from Xylella fastidiosa (strain M23).